Consider the following 163-residue polypeptide: Large ribosomal subunit protein uL18 (163 aa).

Belongs to the universal ribosomal protein uL18 family. In terms of assembly, part of the 50S ribosomal subunit. Contacts the 5S and 23S rRNAs.

Its function is as follows. This is one of the proteins that bind and probably mediate the attachment of the 5S RNA into the large ribosomal subunit, where it forms part of the central protuberance. The sequence is that of Large ribosomal subunit protein uL18 from Thermoplasma acidophilum (strain ATCC 25905 / DSM 1728 / JCM 9062 / NBRC 15155 / AMRC-C165).